We begin with the raw amino-acid sequence, 455 residues long: tRNA modification GTPase MnmE (455 aa).

The (6S)-5-formyl-5,6,7,8-tetrahydrofolate site is built by Arg24, Glu81, and Lys121. The TrmE-type G domain occupies 217-378 (GMKVVIAGRP…LREHLKDCMG (162 aa)). Residue Asn227 coordinates K(+). GTP-binding positions include 227–232 (NAGKSS), 246–252 (TDIAGTT), 271–274 (DTAG), and 359–361 (SAR). Ser231 is a binding site for Mg(2+). Positions 246, 248, and 251 each coordinate K(+). Thr252 provides a ligand contact to Mg(2+). A (6S)-5-formyl-5,6,7,8-tetrahydrofolate-binding site is contributed by Lys455.

The protein belongs to the TRAFAC class TrmE-Era-EngA-EngB-Septin-like GTPase superfamily. TrmE GTPase family. In terms of assembly, homodimer. Heterotetramer of two MnmE and two MnmG subunits. K(+) serves as cofactor.

It is found in the cytoplasm. Its function is as follows. Exhibits a very high intrinsic GTPase hydrolysis rate. Involved in the addition of a carboxymethylaminomethyl (cmnm) group at the wobble position (U34) of certain tRNAs, forming tRNA-cmnm(5)s(2)U34. This Photobacterium profundum (strain SS9) protein is tRNA modification GTPase MnmE.